We begin with the raw amino-acid sequence, 419 residues long: 3-phosphoshikimate 1-carboxyvinyltransferase (419 aa).

Positions 21, 22, and 26 each coordinate 3-phosphoshikimate. K21 serves as a coordination point for phosphoenolpyruvate. Residues G91 and R119 each contribute to the phosphoenolpyruvate site. Residues S164, S165, Q166, S191, D305, and K332 each coordinate 3-phosphoshikimate. Q166 contributes to the phosphoenolpyruvate binding site. Residue D305 is the Proton acceptor of the active site. Residues R336 and R376 each coordinate phosphoenolpyruvate.

It belongs to the EPSP synthase family. Monomer.

Its subcellular location is the cytoplasm. It carries out the reaction 3-phosphoshikimate + phosphoenolpyruvate = 5-O-(1-carboxyvinyl)-3-phosphoshikimate + phosphate. It participates in metabolic intermediate biosynthesis; chorismate biosynthesis. Functionally, catalyzes the transfer of the enolpyruvyl moiety of phosphoenolpyruvate (PEP) to the 5-hydroxyl of shikimate-3-phosphate (S3P) to produce enolpyruvyl shikimate-3-phosphate and inorganic phosphate. The sequence is that of 3-phosphoshikimate 1-carboxyvinyltransferase from Methanothermobacter thermautotrophicus (strain ATCC 29096 / DSM 1053 / JCM 10044 / NBRC 100330 / Delta H) (Methanobacterium thermoautotrophicum).